Here is a 563-residue protein sequence, read N- to C-terminus: F-box/kelch-repeat protein At5g42350 (563 aa).

Residues 129 to 175 (YRKHVYLPDDILEMCLMRLPLTSLLNAHLVCKKWQSMANTQRFLQMR) enclose the F-box domain. 3 Kelch repeats span residues 184 to 231 (WLFL…SIHE), 232 to 282 (EIYI…ATEV), and 355 to 402 (VLIA…IICN).

This Arabidopsis thaliana (Mouse-ear cress) protein is F-box/kelch-repeat protein At5g42350.